Here is a 440-residue protein sequence, read N- to C-terminus: Xylose isomerase (440 aa).

Residues histidine 100 and aspartate 103 contribute to the active site. Mg(2+) contacts are provided by glutamate 231, glutamate 267, histidine 270, aspartate 295, aspartate 306, aspartate 308, and aspartate 338.

It belongs to the xylose isomerase family. In terms of assembly, homotetramer. It depends on Mg(2+) as a cofactor.

Its subcellular location is the cytoplasm. The enzyme catalyses alpha-D-xylose = alpha-D-xylulofuranose. The sequence is that of Xylose isomerase from Burkholderia orbicola (strain MC0-3).